The following is a 129-amino-acid chain: Glyoxalase domain-containing protein 5 homolog (129 aa).

Residues 5–128 enclose the VOC domain; the sequence is RLDHLVLTVS…DYNLIEISNY (124 aa).

This sequence belongs to the glyoxalase I family.

In Dictyostelium discoideum (Social amoeba), this protein is Glyoxalase domain-containing protein 5 homolog (glod5).